Reading from the N-terminus, the 143-residue chain is uncharacterized protein (143 aa).

The chain crosses the membrane as a helical span at residues 4 to 24; that stretch reads FGIVALSIICSIAFLFVAYGV. The tract at residues 97–143 is disordered; that stretch reads TVPFVNTEAPPPRLSSSFSRQSGENAETQSQVSASPFNDKNSPYVQE. Residues 110–143 show a composition bias toward polar residues; sequence LSSSFSRQSGENAETQSQVSASPFNDKNSPYVQE.

It is found in the golgi apparatus membrane. This is an uncharacterized protein from Schizosaccharomyces pombe (strain 972 / ATCC 24843) (Fission yeast).